The chain runs to 158 residues: UPF0262 protein R00612 (158 aa).

This sequence belongs to the UPF0262 family.

This Rhizobium meliloti (strain 1021) (Ensifer meliloti) protein is UPF0262 protein R00612.